The following is a 244-amino-acid chain: Tyrosine recombinase XerD-like (244 aa).

In terms of domain architecture, Core-binding (CB) spans 1-73; sequence MRDRISAFLE…ACNQFLYFLY (73 aa). The 155-residue stretch at 90–244 folds into the Tyr recombinase domain; that stretch reads AEKKTEKPEI…KTVLTLEKYR (155 aa). Catalysis depends on residues Lys-150 and Arg-211. The active-site O-(3'-phospho-DNA)-tyrosine intermediate is the Tyr-243.

Belongs to the 'phage' integrase family. XerD-like subfamily.

Its subcellular location is the cytoplasm. Functionally, putative tyrosine recombinase. Not involved in the cutting and rejoining of the recombining DNA molecules on dif(SL) site. The protein is Tyrosine recombinase XerD-like of Streptococcus pneumoniae (strain Hungary19A-6).